The following is a 474-amino-acid chain: Probable glycine dehydrogenase (decarboxylating) subunit 2 (474 aa).

Lys-262 is subject to N6-(pyridoxal phosphate)lysine.

The protein belongs to the GcvP family. C-terminal subunit subfamily. As to quaternary structure, the glycine cleavage system is composed of four proteins: P, T, L and H. In this organism, the P 'protein' is a heterodimer of two subunits. Pyridoxal 5'-phosphate serves as cofactor.

It carries out the reaction N(6)-[(R)-lipoyl]-L-lysyl-[glycine-cleavage complex H protein] + glycine + H(+) = N(6)-[(R)-S(8)-aminomethyldihydrolipoyl]-L-lysyl-[glycine-cleavage complex H protein] + CO2. Functionally, the glycine cleavage system catalyzes the degradation of glycine. The P protein binds the alpha-amino group of glycine through its pyridoxal phosphate cofactor; CO(2) is released and the remaining methylamine moiety is then transferred to the lipoamide cofactor of the H protein. In Thermotoga petrophila (strain ATCC BAA-488 / DSM 13995 / JCM 10881 / RKU-1), this protein is Probable glycine dehydrogenase (decarboxylating) subunit 2.